We begin with the raw amino-acid sequence, 396 residues long: tRNA-specific 2-thiouridylase MnmA (396 aa).

Residues 42-49 (GMSGGVDS) and Met68 each bind ATP. The tract at residues 128–130 (NPD) is interaction with target base in tRNA. The active-site Nucleophile is Cys133. Cys133 and Cys230 form a disulfide bridge. An ATP-binding site is contributed by Gly158. The interaction with tRNA stretch occupies residues 180 to 182 (KDQ). The active-site Cysteine persulfide intermediate is the Cys230. Residues 342–343 (RY) are interaction with tRNA.

It belongs to the MnmA/TRMU family.

The protein localises to the cytoplasm. The catalysed reaction is S-sulfanyl-L-cysteinyl-[protein] + uridine(34) in tRNA + AH2 + ATP = 2-thiouridine(34) in tRNA + L-cysteinyl-[protein] + A + AMP + diphosphate + H(+). In terms of biological role, catalyzes the 2-thiolation of uridine at the wobble position (U34) of tRNA, leading to the formation of s(2)U34. The chain is tRNA-specific 2-thiouridylase MnmA from Pseudoalteromonas atlantica (strain T6c / ATCC BAA-1087).